The chain runs to 202 residues: Small ribosomal subunit protein uS4 (202 aa).

The interval 18 to 42 is disordered; the sequence is LPGLTRKAAKRSYPPGQHGQARRKR. Residues 90 to 152 enclose the S4 RNA-binding domain; that stretch reads NRLDNVCFRL…KPSKKLAETN (63 aa).

The protein belongs to the universal ribosomal protein uS4 family. In terms of assembly, part of the 30S ribosomal subunit. Contacts protein S5. The interaction surface between S4 and S5 is involved in control of translational fidelity.

Its function is as follows. One of the primary rRNA binding proteins, it binds directly to 16S rRNA where it nucleates assembly of the body of the 30S subunit. Functionally, with S5 and S12 plays an important role in translational accuracy. This chain is Small ribosomal subunit protein uS4, found in Synechococcus sp. (strain RCC307).